The following is a 380-amino-acid chain: Probable protein phosphatase 2C 27 (380 aa).

The PPM-type phosphatase domain occupies 84 to 344; the sequence is RSGSCAEQGA…DNLTVIVVCF (261 aa). 4 residues coordinate Mn(2+): Asp-128, Gly-129, Asp-292, and Asp-335.

The protein belongs to the PP2C family. Mg(2+) serves as cofactor. The cofactor is Mn(2+). Expressed in roots, leaves, stems, flower, and trichomes.

The protein resides in the nucleus. Its subcellular location is the cytoplasm. The enzyme catalyses O-phospho-L-seryl-[protein] + H2O = L-seryl-[protein] + phosphate. It catalyses the reaction O-phospho-L-threonyl-[protein] + H2O = L-threonyl-[protein] + phosphate. In terms of biological role, confers salt tolerance by triggering the expression of stress-responsive genes. The protein is Probable protein phosphatase 2C 27 of Arabidopsis thaliana (Mouse-ear cress).